The sequence spans 53 residues: Large ribosomal subunit protein bL33A (53 aa).

The protein belongs to the bacterial ribosomal protein bL33 family.

The protein is Large ribosomal subunit protein bL33A (rpmG1) of Mycoplasma genitalium (strain ATCC 33530 / DSM 19775 / NCTC 10195 / G37) (Mycoplasmoides genitalium).